The primary structure comprises 744 residues: Vesicle-fusing ATPase (744 aa).

Lysine 105 carries the post-translational modification N6-acetyllysine. Phosphoserine is present on serine 207. Tyrosine 259 is subject to Phosphotyrosine. ATP contacts are provided by residues 505–510 (NGIIKW) and 545–552 (PHSGKTAL). Threonine 550 is a binding site for Mg(2+). Serine 569 is modified (phosphoserine; by CDK16).

It belongs to the AAA ATPase family. In terms of assembly, homohexamer. Interacts with GABARAP and GABARAPL2. Interacts with GRIA2. Interacts with PLK2, leading to disrupt the interaction with GRIA2. Interacts with MUSK; may regulate MUSK endocytosis and activity. Interacts with CDK16. Mg(2+) is required as a cofactor. Phosphorylation at Ser-569 interferes with homohexamerization.

The protein localises to the cytoplasm. It carries out the reaction ATP + H2O = ADP + phosphate + H(+). Functionally, required for vesicle-mediated transport. Catalyzes the fusion of transport vesicles within the Golgi cisternae. Is also required for transport from the endoplasmic reticulum to the Golgi stack. Seems to function as a fusion protein required for the delivery of cargo proteins to all compartments of the Golgi stack independent of vesicle origin. Interaction with AMPAR subunit GRIA2 leads to influence GRIA2 membrane cycling. This Cricetulus griseus (Chinese hamster) protein is Vesicle-fusing ATPase (NSF).